A 195-amino-acid polypeptide reads, in one-letter code: HTH-type transcriptional regulator BetI (195 aa).

The 61-residue stretch at 8–68 (SIRRRQLIDA…ATMRDITSQL (61 aa)) folds into the HTH tetR-type domain. Positions 31–50 (TIAQIARRAGVSTGIISHYF) form a DNA-binding region, H-T-H motif.

Its pathway is amine and polyamine biosynthesis; betaine biosynthesis via choline pathway [regulation]. Its function is as follows. Repressor involved in the biosynthesis of the osmoprotectant glycine betaine. It represses transcription of the choline transporter BetT and the genes of BetAB involved in the synthesis of glycine betaine. The sequence is that of HTH-type transcriptional regulator BetI from Escherichia coli (strain K12 / DH10B).